A 424-amino-acid chain; its full sequence is 5-methylthioadenosine/S-adenosylhomocysteine deaminase (424 aa).

Residues H60 and H62 each contribute to the Zn(2+) site. Residues E89 and H181 each coordinate substrate. Position 208 (H208) interacts with Zn(2+). E211 and D296 together coordinate substrate. Zn(2+) is bound at residue D296.

Belongs to the metallo-dependent hydrolases superfamily. MTA/SAH deaminase family. It depends on Zn(2+) as a cofactor.

It carries out the reaction S-adenosyl-L-homocysteine + H2O + H(+) = S-inosyl-L-homocysteine + NH4(+). It catalyses the reaction S-methyl-5'-thioadenosine + H2O + H(+) = S-methyl-5'-thioinosine + NH4(+). Functionally, catalyzes the deamination of 5-methylthioadenosine and S-adenosyl-L-homocysteine into 5-methylthioinosine and S-inosyl-L-homocysteine, respectively. Is also able to deaminate adenosine. The chain is 5-methylthioadenosine/S-adenosylhomocysteine deaminase from Thermococcus onnurineus (strain NA1).